The following is a 666-amino-acid chain: UvrABC system protein B (666 aa).

One can recognise a Helicase ATP-binding domain in the interval 25-412; that stretch reads NGIKNNNKWQ…SENIAEQVIR (388 aa). ATP is bound at residue 38 to 45; that stretch reads GVTGSGKT. Residues 91-114 carry the Beta-hairpin motif; it reads YYDYYQPEAYVAQTDTYIEKDASI. The Helicase C-terminal domain occupies 429-595; it reads QIDDLYSEIK…TIKKAVRDVI (167 aa). One can recognise a UVR domain in the interval 622-657; the sequence is DKLIKEFEKEMKEAAKELQFEKAAYFRDKVNELKKK.

The protein belongs to the UvrB family. As to quaternary structure, forms a heterotetramer with UvrA during the search for lesions. Interacts with UvrC in an incision complex.

It localises to the cytoplasm. In terms of biological role, the UvrABC repair system catalyzes the recognition and processing of DNA lesions. A damage recognition complex composed of 2 UvrA and 2 UvrB subunits scans DNA for abnormalities. Upon binding of the UvrA(2)B(2) complex to a putative damaged site, the DNA wraps around one UvrB monomer. DNA wrap is dependent on ATP binding by UvrB and probably causes local melting of the DNA helix, facilitating insertion of UvrB beta-hairpin between the DNA strands. Then UvrB probes one DNA strand for the presence of a lesion. If a lesion is found the UvrA subunits dissociate and the UvrB-DNA preincision complex is formed. This complex is subsequently bound by UvrC and the second UvrB is released. If no lesion is found, the DNA wraps around the other UvrB subunit that will check the other stand for damage. This Clostridium acetobutylicum (strain ATCC 824 / DSM 792 / JCM 1419 / IAM 19013 / LMG 5710 / NBRC 13948 / NRRL B-527 / VKM B-1787 / 2291 / W) protein is UvrABC system protein B.